The primary structure comprises 37 residues: uncharacterized protein (37 aa).

The interval 1-37 (MGQVEKARQGQFARPHHSDSQRRVRAWSRIQRRARSF) is disordered. Residues 23–37 (RVRAWSRIQRRARSF) are compositionally biased toward basic residues.

This is an uncharacterized protein from Bacillus phage phi105 (Bacteriophage phi-105).